The sequence spans 104 residues: Iron-sulfur cluster assembly protein CyaY (104 aa).

It belongs to the frataxin family.

In terms of biological role, involved in iron-sulfur (Fe-S) cluster assembly. May act as a regulator of Fe-S biogenesis. This is Iron-sulfur cluster assembly protein CyaY from Aliivibrio fischeri (strain ATCC 700601 / ES114) (Vibrio fischeri).